Reading from the N-terminus, the 330-residue chain is Phosphate acyltransferase (330 aa).

Belongs to the PlsX family. As to quaternary structure, homodimer. Probably interacts with PlsY.

It is found in the cytoplasm. The enzyme catalyses a fatty acyl-[ACP] + phosphate = an acyl phosphate + holo-[ACP]. The protein operates within lipid metabolism; phospholipid metabolism. Its function is as follows. Catalyzes the reversible formation of acyl-phosphate (acyl-PO(4)) from acyl-[acyl-carrier-protein] (acyl-ACP). This enzyme utilizes acyl-ACP as fatty acyl donor, but not acyl-CoA. The protein is Phosphate acyltransferase of Bacillus cereus (strain B4264).